The chain runs to 150 residues: MKRIMLIGPSQCGKTSLTQCMRGEALHYQKTQAIVWSPTTIDTPGEYLENRCLYSALLASACEADIIALVLNADAPWSPFSPGFTGPMNRPVIGLVTKADLASPQRISLVESWLVQAGAQKVFFTSALENTGVDEMFIFLNAKESSCLTK.

Residues 1–42 (MKRIMLIGPSQCGKTSLTQCMRGEALHYQKTQAIVWSPTTID) form a targets protein to the BMC region. 8-15 (GPSQCGKT) lines the GTP pocket.

It belongs to the EutP/PduV family. In terms of assembly, interacts with PduU, probably via the PduU beta-barrel which is predicted by modeling to be on the exterior of the BMC.

It is found in the bacterial microcompartment. The protein operates within polyol metabolism; 1,2-propanediol degradation. In terms of biological role, may play a role in the spatial distribution of the bacterial microcompartment (BMC) dedicated to 1,2-PD degradation, perhaps being involved in cytoskeleton dynamics; might bind GTP. This subunit is directly targeted to the BMC. Its function is as follows. Expression of a cosmid containing the full 21-gene pdu operon in E.coli allows E.coli to grow on 1,2-propanediol (1,2-PD) with the appearance of bacterial microcompartments (BMC) in its cytoplasm. The 1,2-PD-specific bacterial microcompartment (BMC) concentrates low levels of 1,2-PD catabolic enzymes, concentrates volatile reaction intermediates thus enhancing pathway flux and keeps the level of toxic, mutagenic propionaldehyde low. In Citrobacter freundii, this protein is Propanediol utilization protein PduV.